Reading from the N-terminus, the 272-residue chain is Formamidopyrimidine-DNA glycosylase (272 aa).

Proline 2 (schiff-base intermediate with DNA) is an active-site residue. Glutamate 3 (proton donor) is an active-site residue. Lysine 58 functions as the Proton donor; for beta-elimination activity in the catalytic mechanism. Positions 92, 111, and 153 each coordinate DNA. An FPG-type zinc finger spans residues 238-272; sequence NVYGRGGEPCPVCAKPLTEKPLSQRTTVYCTHCQN. Arginine 262 functions as the Proton donor; for delta-elimination activity in the catalytic mechanism.

This sequence belongs to the FPG family. As to quaternary structure, monomer. The cofactor is Zn(2+).

The catalysed reaction is Hydrolysis of DNA containing ring-opened 7-methylguanine residues, releasing 2,6-diamino-4-hydroxy-5-(N-methyl)formamidopyrimidine.. It catalyses the reaction 2'-deoxyribonucleotide-(2'-deoxyribose 5'-phosphate)-2'-deoxyribonucleotide-DNA = a 3'-end 2'-deoxyribonucleotide-(2,3-dehydro-2,3-deoxyribose 5'-phosphate)-DNA + a 5'-end 5'-phospho-2'-deoxyribonucleoside-DNA + H(+). Involved in base excision repair of DNA damaged by oxidation or by mutagenic agents. Acts as a DNA glycosylase that recognizes and removes damaged bases. Has a preference for oxidized purines, such as 7,8-dihydro-8-oxoguanine (8-oxoG). Has AP (apurinic/apyrimidinic) lyase activity and introduces nicks in the DNA strand. Cleaves the DNA backbone by beta-delta elimination to generate a single-strand break at the site of the removed base with both 3'- and 5'-phosphates. This chain is Formamidopyrimidine-DNA glycosylase, found in Teredinibacter turnerae (strain ATCC 39867 / T7901).